Reading from the N-terminus, the 220-residue chain is Putative F-box protein At3g20705 (220 aa).

The region spanning 1–51 (MMMMSNLPNDLVEEILSRVTVTFMRTVRSICKKWNALTKDRSFTNKYIRNI) is the F-box domain.

The sequence is that of Putative F-box protein At3g20705 from Arabidopsis thaliana (Mouse-ear cress).